Here is an 891-residue protein sequence, read N- to C-terminus: Aconitate hydratase A (891 aa).

Residues C435, C501, and C504 each contribute to the [4Fe-4S] cluster site.

The protein belongs to the aconitase/IPM isomerase family. In terms of assembly, monomer. [4Fe-4S] cluster is required as a cofactor.

The catalysed reaction is citrate = D-threo-isocitrate. It carries out the reaction (2S,3R)-3-hydroxybutane-1,2,3-tricarboxylate = 2-methyl-cis-aconitate + H2O. It functions in the pathway carbohydrate metabolism; tricarboxylic acid cycle; isocitrate from oxaloacetate: step 2/2. It participates in organic acid metabolism; propanoate degradation. In terms of biological role, involved in the catabolism of short chain fatty acids (SCFA) via the tricarboxylic acid (TCA)(acetyl degradation route) and the 2-methylcitrate cycle I (propionate degradation route). Catalyzes the reversible isomerization of citrate to isocitrate via cis-aconitate. Also catalyzes the hydration of 2-methyl-cis-aconitate to yield (2R,3S)-2-methylisocitrate. The (2S,3S)-2-methylcitrate (2-MC) is a very poor substrate. The apo form of AcnA functions as a RNA-binding regulatory protein. The chain is Aconitate hydratase A (acnA) from Salmonella typhimurium (strain LT2 / SGSC1412 / ATCC 700720).